We begin with the raw amino-acid sequence, 86 residues long: Small ribosomal subunit protein bS20 (86 aa).

Residues 1–11 (MANHKSALKRA) are compositionally biased toward basic residues. A disordered region spans residues 1–27 (MANHKSALKRARQNEERRIRNRARKTR).

Belongs to the bacterial ribosomal protein bS20 family.

Its function is as follows. Binds directly to 16S ribosomal RNA. This chain is Small ribosomal subunit protein bS20, found in Syntrophobacter fumaroxidans (strain DSM 10017 / MPOB).